A 116-amino-acid chain; its full sequence is Non-specific lipid-transfer protein D, cotyledon-specific isoform (116 aa).

Residues 1-24 (MKNIFFSVFFLLSFLLCLANVSEA) form the signal peptide. 4 disulfide bridges follow: Cys28–Cys76, Cys38–Cys53, Cys54–Cys98, and Cys74–Cys112.

This sequence belongs to the plant LTP family.

Functionally, plant non-specific lipid-transfer proteins transfer phospholipids as well as galactolipids across membranes. May play a role in wax or cutin deposition in the cell walls of expanding epidermal cells and certain secretory tissues. The sequence is that of Non-specific lipid-transfer protein D, cotyledon-specific isoform from Ricinus communis (Castor bean).